We begin with the raw amino-acid sequence, 205 residues long: Small ribosomal subunit protein uS4c (205 aa).

A disordered region spans residues 22–42 (TSKISKKTNTPGEHGQPQNKL). Residues 28-42 (KTNTPGEHGQPQNKL) are compositionally biased toward polar residues. In terms of domain architecture, S4 RNA-binding spans 94-157 (MRLDNIVYRL…ASRDLVKKFV (64 aa)).

It belongs to the universal ribosomal protein uS4 family. As to quaternary structure, part of the 30S ribosomal subunit. Contacts protein S5. The interaction surface between S4 and S5 is involved in control of translational fidelity.

It is found in the plastid. Its subcellular location is the chloroplast. In terms of biological role, one of the primary rRNA binding proteins, it binds directly to 16S rRNA where it nucleates assembly of the body of the 30S subunit. With S5 and S12 plays an important role in translational accuracy. The sequence is that of Small ribosomal subunit protein uS4c (rps4) from Tupiella akineta (Green alga).